The primary structure comprises 185 residues: Ubiquitin-conjugating enzyme E2 5 (185 aa).

In terms of domain architecture, UBC core spans 1-148 (MSSPSKRREM…VKEYCEKYAK (148 aa)). Catalysis depends on cysteine 85, which acts as the Glycyl thioester intermediate. Positions 146–185 (YAKPRADTEEMSSDDEMSEDEYASDGDDEDDVAIAGKLDP) are disordered. Residues 154–177 (EEMSSDDEMSEDEYASDGDDEDDV) show a composition bias toward acidic residues.

This sequence belongs to the ubiquitin-conjugating enzyme family. As to expression, expressed in developing ovules, but not in vascular tissues.

The enzyme catalyses S-ubiquitinyl-[E1 ubiquitin-activating enzyme]-L-cysteine + [E2 ubiquitin-conjugating enzyme]-L-cysteine = [E1 ubiquitin-activating enzyme]-L-cysteine + S-ubiquitinyl-[E2 ubiquitin-conjugating enzyme]-L-cysteine.. The protein operates within protein modification; protein ubiquitination. Its function is as follows. Accepts the ubiquitin from the E1 complex and catalyzes its covalent attachment to other proteins. The protein is Ubiquitin-conjugating enzyme E2 5 (UBC5) of Arabidopsis thaliana (Mouse-ear cress).